A 1134-amino-acid polypeptide reads, in one-letter code: Tyrosine-protein kinase receptor Tie-1 (1134 aa).

A signal peptide spans 1–22; it reads MVWWGSSLLLPTLFLASHVGAS. Topologically, residues 23-755 are extracellular; the sequence is VDLTLLANLR…SRAAEEGLDQ (733 aa). One can recognise an Ig-like C2-type 1 domain in the interval 43 to 123; that stretch reads CVSGEAGAGR…VLYVHNSPGA (81 aa). Residues N81 and N159 are each glycosylated (N-linked (GlcNAc...) asparagine). EGF-like domains follow at residues 212 to 254, 256 to 301, and 303 to 343; these read GCGA…TRCE, ACRE…SQCQ, and ACAP…VHCE. Disulfide bonds link C226–C235, C229–C242, C244–C253, C266–C276, C270–C289, C291–C300, C313–C325, C319–C331, and C333–C342. The 92-residue stretch at 349-440 folds into the Ig-like C2-type 2 domain; it reads PQILSMATEV…GQDSRRFKVN (92 aa). Fibronectin type-III domains lie at 444-543, 546-638, and 642-736; these read PPVP…CPEP, QPWL…LPPS, and APRH…LGNG. 3 N-linked (GlcNAc...) asparagine glycosylation sites follow: N501, N592, and N705. A helical membrane pass occupies residues 756-780; sequence QLVLAVVGSVSATCLTILAALLALV. Residues 781–1134 lie on the Cytoplasmic side of the membrane; that stretch reads CIRRSCLHRR…AGIDATAEEA (354 aa). Residues 835–1114 enclose the Protein kinase domain; the sequence is ITFEDLIGEG…RMLEARKAYV (280 aa). Residues 841 to 849 and K866 contribute to the ATP site; that span reads IGEGNFGQV. The Proton acceptor role is filled by D975. The residue at position 1003 (Y1003) is a Phosphotyrosine; by autocatalysis.

This sequence belongs to the protein kinase superfamily. Tyr protein kinase family. Tie subfamily. In terms of assembly, heterodimer with TEK/TIE2. Interacts with SVEP1 (via C-terminus). Phosphorylated on tyrosine residues in response to ANGPT1, most likely by TEK/TIE2. Specifically expressed in developing vascular endothelial cells. Abundantly expressed in lung and heart, moderately in brain, liver and kidney, and weakly in thymus, spleen and testis.

The protein localises to the cell membrane. It catalyses the reaction L-tyrosyl-[protein] + ATP = O-phospho-L-tyrosyl-[protein] + ADP + H(+). Transmembrane tyrosine-protein kinase that may modulate TEK/TIE2 activity and contribute to the regulation of angiogenesis. The protein is Tyrosine-protein kinase receptor Tie-1 (Tie1) of Mus musculus (Mouse).